The following is a 299-amino-acid chain: Hemolysin C homolog (299 aa).

CBS domains follow at residues 80–142 (MVPR…NGRL) and 145–202 (LIRK…IDDE).

Belongs to the UPF0053 family. Hemolysin C subfamily.

The chain is Hemolysin C homolog (tlyC) from Rickettsia rickettsii (strain Sheila Smith).